Reading from the N-terminus, the 92-residue chain is UPF0235 protein PYRAB05010 (92 aa).

It belongs to the UPF0235 family.

This Pyrococcus abyssi (strain GE5 / Orsay) protein is UPF0235 protein PYRAB05010.